We begin with the raw amino-acid sequence, 317 residues long: Inositol oxygenase 4 (317 aa).

Residues arginine 58 and 115–117 (DES) contribute to the substrate site. Positions 128, 153, and 154 each coordinate Fe cation. Substrate contacts are provided by residues lysine 157 and 174–175 (GD). Positions 226, 252, and 285 each coordinate Fe cation. 252–253 (HS) lines the substrate pocket.

This sequence belongs to the myo-inositol oxygenase family. Requires Fe cation as cofactor. Expressed in flowers, leaves, siliques, and to a lesser extent in roots.

The protein localises to the cytoplasm. The catalysed reaction is myo-inositol + O2 = D-glucuronate + H2O + H(+). It participates in polyol metabolism; myo-inositol degradation into D-glucuronate; D-glucuronate from myo-inositol: step 1/1. Its function is as follows. Catalyzes the oxygenative cleavage of myo-inositol to D-glucuronate. Involved in the biosynthesis of UDP-glucuronic acid (UDP-GlcA), providing nucleotide sugars for cell-wall polymers. May be also involved in plant ascorbate biosynthesis. The polypeptide is Inositol oxygenase 4 (MIOX4) (Arabidopsis thaliana (Mouse-ear cress)).